The following is a 186-amino-acid chain: UPF0200 protein Hbut_0338 (186 aa).

13–20 (GMPGSGKS) serves as a coordination point for ATP.

This sequence belongs to the UPF0200 family.

In Hyperthermus butylicus (strain DSM 5456 / JCM 9403 / PLM1-5), this protein is UPF0200 protein Hbut_0338.